The sequence spans 440 residues: Sialyltransferase-like protein 2 (440 aa).

The Cytoplasmic segment spans residues 1-5; that stretch reads MKLLH. A helical; Signal-anchor for type II membrane protein transmembrane segment spans residues 6-26; that stretch reads LIFLLALTTGISAVLIYIIGV. Over 27–440 the chain is Lumenal; sequence SNLYESNRFT…HGQLCITPAD (414 aa). Residues Asn-113 and Asn-149 are each glycosylated (N-linked (GlcNAc...) asparagine).

The protein belongs to the glycosyltransferase 29 family.

The protein localises to the golgi apparatus membrane. Its function is as follows. May be involved in the transfer of 2-keto-3-deoxy-D-lyxo-heptulosaric acid (Dha) and/or 2-keto-3-deoxy-D-manno-octulosonic acid (Kdo) on the homogalacturonan backbone of rhamnogalacturonan-II. Required for efficient pollen grain germination and pollen tube elongation. Does not possess sialyltransferase activity in vitro. This is Sialyltransferase-like protein 2 from Arabidopsis thaliana (Mouse-ear cress).